The following is a 35-amino-acid chain: Alpha-amanitin proprotein 1 (35 aa).

Residues 1 to 10 constitute a propeptide that is removed on maturation; the sequence is MFDTNATRLP. Isoleucine 11 carries the post-translational modification (3R,4R)-4,5-dihydroxyisoleucine; in form alpha-amanitin. (3R,4S)-4-hydroxyisoleucine; in form gamma-amanitin is present on isoleucine 11. Positions 11 to 18 form a cross-link, cyclopeptide (Ile-Pro); sequence IWGIGCNP. Positions 12 to 16 form a cross-link, 2'-cysteinyl-6'-hydroxytryptophan sulfoxide (Trp-Cys); the sequence is WGIGC. Residue proline 18 is modified to 4-hydroxyproline. Positions 19-35 are excised as a propeptide; sequence WTAEHVDQTLASGNDIC.

The protein belongs to the MSDIN fungal toxin family. Post-translationally, processed by the macrocyclase-peptidase enzyme POPB to yield a toxic bicyclic octapeptide. POPB first removes 10 residues from the N-terminus. Conformational trapping of the remaining peptide forces the enzyme to release this intermediate rather than proceed to macrocyclization. The enzyme rebinds the remaining peptide in a different conformation and catalyzes macrocyclization of the N-terminal 8 residues.

In terms of biological role, major toxin belonging to the bicyclic octapeptides amatoxins that acts by binding non-competitively to RNA polymerase II and greatly slowing the elongation of transcripts from target promoters. In Galerina marginata (strain CBS 339.88), this protein is Alpha-amanitin proprotein 1.